Consider the following 145-residue polypeptide: Actin-depolymerizing factor 2 (145 aa).

The ADF-H domain occupies 13–145; it reads GMGVAPDIRD…DLEVLRERAH (133 aa).

Belongs to the actin-binding proteins ADF family.

Functionally, actin-depolymerizing protein. Severs actin filaments (F-actin) and binds to actin monomers. In Oryza sativa subsp. japonica (Rice), this protein is Actin-depolymerizing factor 2 (ADF2).